A 305-amino-acid chain; its full sequence is RxLR effector protein 17 (305 aa).

Positions 1-24 (MQSILWFALIASVVFLVLVDLASG) are cleaved as a signal peptide. The RxLR-dEER signature appears at 45-60 (RLLRAAHLDRKLSEER). N-linked (GlcNAc...) asparagine glycosylation is found at Asn-207 and Asn-227. The w motif stretch occupies residues 247–269 (LHLKWAVEAKSPKDVVERILKDL).

It belongs to the RxLR effector family. Interacts with host A.thaliana At1G14340.

It is found in the secreted. It localises to the host cell membrane. Secreted effector that confers enhanced plant susceptibility during both compatible and incompatible interactions between the pathogen and its host. Promotes the sexual reproduction of the pathogen in the plant host. The protein is RxLR effector protein 17 of Hyaloperonospora arabidopsidis (strain Emoy2) (Downy mildew agent).